Here is a 392-residue protein sequence, read N- to C-terminus: MAHFNECAHLIEGVDKAQNEYWDILGDEKDPLQVMLDMQRFLQIRLANVREYCYHPDKLETAGDVVSWMREQKDCIDDEFRELLTSLGEMSRGEKEASAVWKKWKARYIEAQEKRIDEMSPEDQLEIKFELVDIFHFVLNMFVGLGMNAEEIFKLYYLKNKHILNVKIMDIKQKFYRTYIVKVRTPKGVFWYAGKHESFIVNPYNDKYPGSGKILWNIYRKYGFNYKIRWSKCHGSREKSYEVERELISALKRKHPDTCINISPGGQGGEGRKWTEQQRLEHKLRLNNPETKTRMKNSQRIAQNRAERKARQSEVMKKFYSNGGNKKISEGTSRAQRKAPHWHEPLKSEIHELWVSLGKPATGPVVKALKGKYDVTSSALKNLIYLFRKEDV.

The segment at 322-341 (NGGNKKISEGTSRAQRKAPH) is disordered.

May play a role in viral DNA replication. Found associated with a viral DNA origin of replication and with host membranes, may attach this origin to the bacterial envelope to initiate replication. This Enterobacteria phage T4 (Bacteriophage T4) protein is DNA replication protein (69).